A 113-amino-acid polypeptide reads, in one-letter code: Outer membrane protein assembly factor BamE (113 aa).

The first 19 residues, Met1 to Gly19, serve as a signal peptide directing secretion. Residue Cys20 is the site of N-palmitoyl cysteine attachment. A lipid anchor (S-diacylglycerol cysteine) is attached at Cys20.

It belongs to the BamE family. As to quaternary structure, part of the Bam complex, which is composed of the outer membrane protein BamA, and four lipoproteins BamB, BamC, BamD and BamE.

The protein resides in the cell outer membrane. Its function is as follows. Part of the outer membrane protein assembly complex, which is involved in assembly and insertion of beta-barrel proteins into the outer membrane. In Escherichia coli O6:H1 (strain CFT073 / ATCC 700928 / UPEC), this protein is Outer membrane protein assembly factor BamE.